The sequence spans 352 residues: Phosphoribosylformylglycinamidine cyclo-ligase (352 aa).

The protein belongs to the AIR synthase family.

It localises to the cytoplasm. The catalysed reaction is 2-formamido-N(1)-(5-O-phospho-beta-D-ribosyl)acetamidine + ATP = 5-amino-1-(5-phospho-beta-D-ribosyl)imidazole + ADP + phosphate + H(+). It functions in the pathway purine metabolism; IMP biosynthesis via de novo pathway; 5-amino-1-(5-phospho-D-ribosyl)imidazole from N(2)-formyl-N(1)-(5-phospho-D-ribosyl)glycinamide: step 2/2. The protein is Phosphoribosylformylglycinamidine cyclo-ligase of Ectopseudomonas mendocina (strain ymp) (Pseudomonas mendocina).